The sequence spans 265 residues: Hydroxyethylthiazole kinase (265 aa).

Methionine 44 is a binding site for substrate. ATP contacts are provided by lysine 120 and threonine 166. Residue glycine 193 coordinates substrate.

It belongs to the Thz kinase family. Mg(2+) is required as a cofactor.

It catalyses the reaction 5-(2-hydroxyethyl)-4-methylthiazole + ATP = 4-methyl-5-(2-phosphooxyethyl)-thiazole + ADP + H(+). It functions in the pathway cofactor biosynthesis; thiamine diphosphate biosynthesis; 4-methyl-5-(2-phosphoethyl)-thiazole from 5-(2-hydroxyethyl)-4-methylthiazole: step 1/1. Its function is as follows. Catalyzes the phosphorylation of the hydroxyl group of 4-methyl-5-beta-hydroxyethylthiazole (THZ). This is Hydroxyethylthiazole kinase from Clostridium novyi (strain NT).